The chain runs to 336 residues: GTPase Obg (336 aa).

Positions 1 to 159 (MKFVDEATLI…KTLKLELKLL (159 aa)) constitute an Obg domain. One can recognise an OBG-type G domain in the interval 160–329 (ADVGLVGLPN…LIEAIFAQLR (170 aa)). Residues 166–173 (GLPNAGKS), 191–195 (FTTLA), 213–216 (DIPG), 283–286 (NKMD), and 310–312 (SAI) each bind GTP. 2 residues coordinate Mg(2+): Ser173 and Thr193.

This sequence belongs to the TRAFAC class OBG-HflX-like GTPase superfamily. OBG GTPase family. Monomer. Mg(2+) serves as cofactor.

Its subcellular location is the cytoplasm. Its function is as follows. An essential GTPase which binds GTP, GDP and possibly (p)ppGpp with moderate affinity, with high nucleotide exchange rates and a fairly low GTP hydrolysis rate. Plays a role in control of the cell cycle, stress response, ribosome biogenesis and in those bacteria that undergo differentiation, in morphogenesis control. This Desulfatibacillum aliphaticivorans protein is GTPase Obg.